We begin with the raw amino-acid sequence, 236 residues long: Large ribosomal subunit protein uL1 (236 aa).

The protein belongs to the universal ribosomal protein uL1 family. As to quaternary structure, part of the 50S ribosomal subunit.

In terms of biological role, binds directly to 23S rRNA. The L1 stalk is quite mobile in the ribosome, and is involved in E site tRNA release. Protein L1 is also a translational repressor protein, it controls the translation of the L11 operon by binding to its mRNA. The sequence is that of Large ribosomal subunit protein uL1 from Corynebacterium efficiens (strain DSM 44549 / YS-314 / AJ 12310 / JCM 11189 / NBRC 100395).